Reading from the N-terminus, the 110-residue chain is MTYPPHRAFSRSDVPYPLLSSPVQWPLSLVVGDTSTRWPQQPSALESDCPGPSHPCLAGLLGPMHPVDIPLSTALHSKHQRRLTQCVLMVQSPSKQRSLYLLNKKIPHDA.

This is an uncharacterized protein from Homo sapiens (Human).